The sequence spans 119 residues: Large ribosomal subunit protein uL18 (119 aa).

The protein belongs to the universal ribosomal protein uL18 family. As to quaternary structure, part of the 50S ribosomal subunit; part of the 5S rRNA/L5/L18/L25 subcomplex. Contacts the 5S and 23S rRNAs.

Functionally, this is one of the proteins that bind and probably mediate the attachment of the 5S RNA into the large ribosomal subunit, where it forms part of the central protuberance. This Chelativorans sp. (strain BNC1) protein is Large ribosomal subunit protein uL18.